The chain runs to 336 residues: C2H2 finger domain transcription factor mtfA (336 aa).

Positions 1–245 are disordered; sequence MDVASLISPS…PSPGHQQMIS (245 aa). 2 stretches are compositionally biased toward polar residues: residues 7 to 29 and 36 to 56; these read ISPSESDTVPTFRSRSIQNSSAS and EQSTGSYFSAVPTHTTSYSRT. Residues 136–149 are compositionally biased toward low complexity; it reads SPSTSSVSAASSSA. Residues 168 to 181 are compositionally biased toward polar residues; sequence TDRSSISSQGSVQH. Positions 182-210 are enriched in low complexity; that stretch reads AASAPYASPAPSVSSFSSPIEPSTPSTAA. Polar residues predominate over residues 216–245; the sequence is PAPNTFQNPSPFPQTSTASLPSPGHQQMIS. 2 consecutive C2H2-type zinc fingers follow at residues 272–294 and 300–325; these read YICRTCHKAFSRPSSLRIHSHSH and FRCTHAGCGKAFSVRSNMKRHERGCH.

The protein resides in the nucleus. Its function is as follows. Transcription factor that controls morphogenesis and virulence. Acts as a positive regulator of gliotixin and protease production. The protein is C2H2 finger domain transcription factor mtfA of Aspergillus fumigatus (strain CBS 144.89 / FGSC A1163 / CEA10) (Neosartorya fumigata).